We begin with the raw amino-acid sequence, 608 residues long: ESX-3 secretion system protein EccA3 (608 aa).

Residues 284 to 303 are disordered; that stretch reads EARSDPWDPETEPSEAEFVD. The segment covering 290-301 has biased composition (acidic residues); that stretch reads WDPETEPSEAEF. Position 365–372 (365–372) interacts with ATP; it reads GPPGTGKT.

It belongs to the CbxX/CfxQ family. Part of the ESX-3 / type VII secretion system (T7SS), which is composed of cytosolic and membrane components.

The protein localises to the cytoplasm. Part of the ESX-3 specialized secretion system, which is required for siderophore-mediated iron acquisition and for the secretion of EsxH and EsxG. EccA3 exhibits ATPase activity and may provide energy for the export of ESX-3 substrates. This chain is ESX-3 secretion system protein EccA3, found in Mycolicibacterium smegmatis (strain ATCC 700084 / mc(2)155) (Mycobacterium smegmatis).